A 320-amino-acid chain; its full sequence is MTPRHLLAAGDLSRDDAIAILDDADRFAQALVGREVKKLPTLRGRTVVTMFYENSTRTRVSFEVAGKWMSADLINVSASGSSVSKGESLRDTALTLRAAGADALIIRHPASGAARLFADWTAGQSDGGPSVINAGDGTHEHPTQALLDALTIRQRLGGIEGRRVVIVGDILHSRVARSNVTLLHTLGAEVVLVAPPTLLPVGVADWPVTVSHDLDAELPAADAVLMLRVQAERMNGGFFPSVREYSTLYGLSDRRQAMLGGHAVVLHPGPMLRGMEIASSVADSSQSAVLQQVSNGVHIRMAVLFHVLVGLESAGEEGAA.

Residues arginine 57 and threonine 58 each contribute to the carbamoyl phosphate site. Lysine 85 lines the L-aspartate pocket. Residues arginine 107, histidine 141, and glutamine 144 each coordinate carbamoyl phosphate. Residues arginine 174 and arginine 228 each coordinate L-aspartate. Carbamoyl phosphate contacts are provided by glycine 269 and proline 270.

It belongs to the aspartate/ornithine carbamoyltransferase superfamily. ATCase family. As to quaternary structure, heterododecamer (2C3:3R2) of six catalytic PyrB chains organized as two trimers (C3), and six regulatory PyrI chains organized as three dimers (R2).

The enzyme catalyses carbamoyl phosphate + L-aspartate = N-carbamoyl-L-aspartate + phosphate + H(+). It functions in the pathway pyrimidine metabolism; UMP biosynthesis via de novo pathway; (S)-dihydroorotate from bicarbonate: step 2/3. Functionally, catalyzes the condensation of carbamoyl phosphate and aspartate to form carbamoyl aspartate and inorganic phosphate, the committed step in the de novo pyrimidine nucleotide biosynthesis pathway. The protein is Aspartate carbamoyltransferase catalytic subunit of Mycobacterium ulcerans (strain Agy99).